We begin with the raw amino-acid sequence, 257 residues long: Type III pantothenate kinase (257 aa).

6–13 (EQGNTNTL) serves as a coordination point for ATP. 107–110 (GADR) serves as a coordination point for substrate. Asp-109 functions as the Proton acceptor in the catalytic mechanism. Asp-129 contributes to the K(+) binding site. Thr-132 contributes to the ATP binding site. Thr-184 is a substrate binding site.

This sequence belongs to the type III pantothenate kinase family. As to quaternary structure, homodimer. Requires NH4(+) as cofactor. K(+) is required as a cofactor.

The protein localises to the cytoplasm. The enzyme catalyses (R)-pantothenate + ATP = (R)-4'-phosphopantothenate + ADP + H(+). Its pathway is cofactor biosynthesis; coenzyme A biosynthesis; CoA from (R)-pantothenate: step 1/5. Functionally, catalyzes the phosphorylation of pantothenate (Pan), the first step in CoA biosynthesis. In Phenylobacterium zucineum (strain HLK1), this protein is Type III pantothenate kinase.